The primary structure comprises 237 residues: Sugar fermentation stimulation protein homolog (237 aa).

Belongs to the SfsA family.

The protein is Sugar fermentation stimulation protein homolog of Pseudomonas syringae pv. tomato (strain ATCC BAA-871 / DC3000).